A 258-amino-acid polypeptide reads, in one-letter code: Thiamine thiazole synthase (258 aa).

Residues Ala-36, 55-56 (EK), Gly-63, Val-127, and 154-156 (HVD) contribute to the NAD(+) site. Residues Asp-156 and His-171 each contribute to the Fe cation site. Met-224 contacts NAD(+). Arg-234 provides a ligand contact to glycine.

Belongs to the THI4 family. Homooctamer; tetramer of dimers. Fe(2+) serves as cofactor.

The enzyme catalyses hydrogen sulfide + glycine + NAD(+) = ADP-5-ethyl-4-methylthiazole-2-carboxylate + nicotinamide + 3 H2O + H(+). The protein operates within cofactor biosynthesis; thiamine diphosphate biosynthesis. Involved in the biosynthesis of the thiazole moiety of thiamine. Catalyzes the conversion of NAD and glycine to adenosine diphosphate 5-(2-hydroxyethyl)-4-methylthiazole-2-carboxylate (ADT), an adenylated thiazole intermediate, using free sulfide as a source of sulfur. The protein is Thiamine thiazole synthase of Methanococcoides burtonii (strain DSM 6242 / NBRC 107633 / OCM 468 / ACE-M).